Reading from the N-terminus, the 138-residue chain is Lutropin subunit beta (138 aa).

The N-terminal stretch at 1-19 (RYQELTVLLLLLLEGGSWG) is a signal peptide. Cystine bridges form between Cys27–Cys75, Cys41–Cys90, Cys44–Cys128, Cys52–Cys106, Cys56–Cys108, and Cys111–Cys118. A glycan (N-linked (GlcNAc...) asparagine) is linked at Asn31.

The protein belongs to the glycoprotein hormones subunit beta family. Heterodimer of a common alpha chain and a unique beta chain which confers biological specificity to thyrotropin, lutropin, follitropin and gonadotropin.

It localises to the secreted. In terms of biological role, promotes spermatogenesis and ovulation by stimulating the testes and ovaries to synthesize steroids. This Osphranter rufus (Red kangaroo) protein is Lutropin subunit beta (LHB).